The following is a 196-amino-acid chain: ATP-dependent Clp protease proteolytic subunit (196 aa).

Ser96 serves as the catalytic Nucleophile. His121 is a catalytic residue.

It belongs to the peptidase S14 family. As to quaternary structure, fourteen ClpP subunits assemble into 2 heptameric rings which stack back to back to give a disk-like structure with a central cavity, resembling the structure of eukaryotic proteasomes.

The protein localises to the cytoplasm. It catalyses the reaction Hydrolysis of proteins to small peptides in the presence of ATP and magnesium. alpha-casein is the usual test substrate. In the absence of ATP, only oligopeptides shorter than five residues are hydrolyzed (such as succinyl-Leu-Tyr-|-NHMec, and Leu-Tyr-Leu-|-Tyr-Trp, in which cleavage of the -Tyr-|-Leu- and -Tyr-|-Trp bonds also occurs).. Functionally, cleaves peptides in various proteins in a process that requires ATP hydrolysis. Has a chymotrypsin-like activity. Plays a major role in the degradation of misfolded proteins. The polypeptide is ATP-dependent Clp protease proteolytic subunit (Streptococcus salivarius).